Consider the following 448-residue polypeptide: Phosphoglucosamine mutase (448 aa).

The active-site Phosphoserine intermediate is serine 102. Mg(2+)-binding residues include serine 102, aspartate 243, aspartate 245, and aspartate 247. Residue serine 102 is modified to Phosphoserine.

This sequence belongs to the phosphohexose mutase family. Mg(2+) is required as a cofactor. Post-translationally, activated by phosphorylation.

It carries out the reaction alpha-D-glucosamine 1-phosphate = D-glucosamine 6-phosphate. Its function is as follows. Catalyzes the conversion of glucosamine-6-phosphate to glucosamine-1-phosphate. In Mycobacterium bovis (strain ATCC BAA-935 / AF2122/97), this protein is Phosphoglucosamine mutase.